A 156-amino-acid chain; its full sequence is V-type proton ATPase 16 kDa proteolipid subunit c (156 aa).

Over 1–7 the chain is Lumenal; the sequence is MAENPIY. A helical membrane pass occupies residues 8–30; the sequence is GPFFGVMGAASAIIFSALGAAYG. Residues 31 to 52 lie on the Cytoplasmic side of the membrane; sequence TAKSGTGIAAMSVMRPELIMKS. Residues 53 to 73 traverse the membrane as a helical segment; it reads IIPVVMAGIIAIYGLVVAVLI. The Lumenal segment spans residues 74–92; the sequence is AGSLDAPSNNYTLYKGFIH. A helical transmembrane segment spans residues 93 to 114; that stretch reads LGAGLAVGFSGLAAGFAIGIVG. The Cytoplasmic segment spans residues 115–126; it reads DAGVRGTAQQPR. Residues 127-152 form a helical membrane-spanning segment; sequence LFVGMILILIFAEVLGLYGLIVAIYL. Residues 153 to 156 lie on the Lumenal side of the membrane; that stretch reads YTKQ.

It belongs to the V-ATPase proteolipid subunit family. V-ATPase is a heteromultimeric enzyme made up of two complexes: the ATP-hydrolytic V1 complex and the proton translocation V0 complex. The V1 complex consists of three catalytic AB heterodimers that form a heterohexamer, three peripheral stalks each consisting of EG heterodimers, one central rotor including subunits D and F, and the regulatory subunits C and H. The proton translocation complex V0 consists of the proton transport subunit a, a ring of proteolipid subunits c9c'', rotary subunit d, subunits e and f, and the accessory subunits VhaAC45 and ATP6AP2.

It localises to the membrane. In terms of biological role, proton-conducting pore forming subunit of the V0 complex of vacuolar(H+)-ATPase (V-ATPase), a multisubunit enzyme composed of a peripheral complex (V1) that hydrolyzes ATP and a membrane integral complex (V0) that translocates protons. V-ATPase is responsible for acidifying and maintaining the pH of intracellular compartments and in some cell types, is targeted to the plasma membrane, where it is responsible for acidifying the extracellular environment. In Heliothis virescens (Tobacco budworm moth), this protein is V-type proton ATPase 16 kDa proteolipid subunit c (VHA16).